Reading from the N-terminus, the 252-residue chain is Aspartate/glutamate leucyltransferase (252 aa).

The protein belongs to the R-transferase family. Bpt subfamily.

The protein resides in the cytoplasm. It catalyses the reaction N-terminal L-glutamyl-[protein] + L-leucyl-tRNA(Leu) = N-terminal L-leucyl-L-glutamyl-[protein] + tRNA(Leu) + H(+). The catalysed reaction is N-terminal L-aspartyl-[protein] + L-leucyl-tRNA(Leu) = N-terminal L-leucyl-L-aspartyl-[protein] + tRNA(Leu) + H(+). Functionally, functions in the N-end rule pathway of protein degradation where it conjugates Leu from its aminoacyl-tRNA to the N-termini of proteins containing an N-terminal aspartate or glutamate. In Polynucleobacter necessarius subsp. necessarius (strain STIR1), this protein is Aspartate/glutamate leucyltransferase.